Reading from the N-terminus, the 390-residue chain is MPLNIEKYILKTNRFGGTLKKYPEDFIVEEIMPDGTVLEVGKEIDFLDETPWNGSFIHFTLEKRNWNTMDALSAIVRATKTKRKNFGFAGTKDKFAVTTQRMGCFGLKKEQLESVKIPEIIIKDIQKSNKKLRMGDLFGNRFTINIRDIEKKYMELENLSDLKLDHVLNYFGIQRFGLKRPITHIVGKFIYERDFESAFYTYCGTPISETGDEKEARELVDSGNFKGALKLFSKGNEYEKRLIQQYFKYKDFKMAFTALPPQLNSMFVNAYQAYLFNEMVNERYNFGFEPLTGDILEDNIPTGALIGYNTEFGKGIQGEIEKEIFNRENIDLKKFKIEDFGNFYGTRRKLITPVYDFKSEFKEKVLTLSFKLERGNYATIVTREFTGNLG.

The Nucleophile role is filled by Asp93. The TRUD domain maps to 166–353 (HVLNYFGIQR…YGTRRKLITP (188 aa)).

This sequence belongs to the pseudouridine synthase TruD family.

It carries out the reaction uridine(13) in tRNA = pseudouridine(13) in tRNA. Its function is as follows. Could be responsible for synthesis of pseudouridine from uracil-13 in transfer RNAs. This is Probable tRNA pseudouridine synthase D from Methanococcus vannielii (strain ATCC 35089 / DSM 1224 / JCM 13029 / OCM 148 / SB).